Reading from the N-terminus, the 181-residue chain is Thioredoxin M-type, chloroplastic (181 aa).

The N-terminal 67 residues, 1–67 (MAIENCLQLS…RQFRYSSVVC (67 aa)), are a transit peptide targeting the chloroplast. Residues 68 to 180 (KASEAVKEVQ…LTDSIEKYLS (113 aa)) form the Thioredoxin domain. Active-site nucleophile residues include cysteine 104 and cysteine 107. The cysteines at positions 104 and 107 are disulfide-linked.

This sequence belongs to the thioredoxin family. Plant M-type subfamily. In terms of assembly, forms a complex with heterodimeric ferredoxin-thioredoxin reductase (FTR) and ferredoxin.

It is found in the plastid. The protein resides in the chloroplast. In terms of biological role, participates in various redox reactions through the reversible oxidation of the active center dithiol to a disulfide. The M form is known to activate NADP-malate dehydrogenase. The polypeptide is Thioredoxin M-type, chloroplastic (Spinacia oleracea (Spinach)).